The sequence spans 105 residues: Putative membrane protein insertion efficiency factor (105 aa).

This sequence belongs to the UPF0161 family.

The protein localises to the cell membrane. Could be involved in insertion of integral membrane proteins into the membrane. The sequence is that of Putative membrane protein insertion efficiency factor from Bifidobacterium longum (strain NCC 2705).